Here is a 603-residue protein sequence, read N- to C-terminus: F-box only protein 46 (603 aa).

The segment at 20-63 is disordered; that stretch reads YSQNQPRPPSAALKPSACPEPGGGAEPDHGPAHSENTPPALATE. 2 positions are modified to phosphoserine; by ATM: Ser21 and Ser67. Disordered stretches follow at residues 111-163, 235-301, 326-360, and 396-440; these read GGSR…PASA, EAQR…ARAK, LLAR…RDCG, and TVSP…AEGT. Low complexity predominate over residues 152–163; the sequence is GPPAAEEGPASA. Ser338 carries the phosphoserine modification. Position 347 is a phosphothreonine (Thr347). Pro residues-rich tracts occupy residues 347–356 and 417–426; these read TPPAPPPPPA and DGPPEPPPAD. One can recognise an F-box domain in the interval 470-522; it reads RQYMLLLPEHVLVKIFSFLPTRALAALKCTCHHFKGIIEAFGVRATDSRWSRD.

In terms of assembly, part of a SCF (SKP1-cullin-F-box) protein ligase complex SCF(FBXO46) composed of CUL1, SKP1, RBX1 and FBXO46. In terms of processing, phosphorylated by ATM in response to DNA damage, promoting ubiquitination and degradation by the SCF(FBXO31) complex. Post-translationally, ATM-phosphorylated FBXO46 is ubiquitinated and degradaded by the SCF(FBXO31) complex in response to DNA damage.

It participates in protein modification; protein ubiquitination. In terms of biological role, substrate-recognition component of the SCF(FBXO46) protein ligase complex, which mediates the ubiquitination and degradation of target proteins. In absence of stress, the SCF(FBXO46) complex catalyzes ubiquitination and degradation of MTOR-phosphorylated FBXO31. This chain is F-box only protein 46, found in Homo sapiens (Human).